Consider the following 627-residue polypeptide: F-box only protein 21 (627 aa).

In terms of domain architecture, F-box spans 27-76 (PSCLVQLPGEVLEYILCSGSLTALDIGRVSSTCRRLREVCQSSGQVWKEQ).

In terms of assembly, directly interacts with SKP1 and CUL1.

Functionally, substrate-recognition component of the SCF (SKP1-CUL1-F-box protein)-type E3 ubiquitin ligase complex. The sequence is that of F-box only protein 21 (Fbxo21) from Mus musculus (Mouse).